The primary structure comprises 258 residues: F-box/SPRY domain-containing protein 1 (258 aa).

The F-box domain occupies 6-54 (TEYAPDIPDNVLELIFSYLKLQDLRNCALVCKSWHRFLSDENNEVWRAQ). The region spanning 64–256 (FKTDLLSVVP…ISMVYLGPPL (193 aa)) is the B30.2/SPRY domain.

The protein belongs to the FBXO45/Fsn family. Component of an E3 ubiquitin ligase complex composed of hiw and Fsn.

It localises to the synapse. It functions in the pathway protein modification; protein ubiquitination. Required in the presynaptic motoneuron to down-regulate the levels of wnd and restrain synaptic terminal growth at the neuromuscular junction (NMJ). This chain is F-box/SPRY domain-containing protein 1, found in Culex quinquefasciatus (Southern house mosquito).